A 515-amino-acid chain; its full sequence is Zinc-binding protein AdcA (515 aa).

The first 28 residues, 1 to 28 (MKKKILLMMSLISVFFAWQLTQAKQVLA), serve as a signal peptide directing secretion. Zn(2+) is bound at residue His-66. The interval 125–148 (DHHHEDADKKHEHNKHSEEGHNHA) is disordered. Residues 129-148 (EDADKKHEHNKHSEEGHNHA) form a his-rich loop region. Zn(2+) is bound by residues His-152, His-216, and Glu-291.

The protein belongs to the bacterial solute-binding protein 9 family.

In terms of biological role, part of the ATP-binding cassette (ABC) transport system AdcABC involved in zinc import. Binds zinc with high affinity and specificity and delivers it to the membrane permease for translocation into the cytoplasm. The chain is Zinc-binding protein AdcA (adcA) from Streptococcus pyogenes serotype M1.